The sequence spans 338 residues: Large ribosomal subunit protein uL3 (338 aa).

2 disordered regions span residues 230 to 256 and 315 to 338; these read HRKG…RPGQ and PARP…SQQP.

This sequence belongs to the universal ribosomal protein uL3 family. In terms of assembly, part of the 50S ribosomal subunit. Forms a cluster with proteins L14 and L24e.

One of the primary rRNA binding proteins, it binds directly near the 3'-end of the 23S rRNA, where it nucleates assembly of the 50S subunit. This Pyrobaculum arsenaticum (strain DSM 13514 / JCM 11321 / PZ6) protein is Large ribosomal subunit protein uL3.